Reading from the N-terminus, the 674-residue chain is tRNA wybutosine-synthesizing protein 4 (674 aa).

S-adenosyl-L-methionine-binding positions include Arg84, Gly109, Asp140, 184-185 (DL), and Glu212.

This sequence belongs to the methyltransferase superfamily. LCMT family.

It carries out the reaction 7-[(3S)-3-amino-3-carboxypropyl]wyosine(37) in tRNA(Phe) + S-adenosyl-L-methionine = 7-[(3S)-(3-amino-3-methoxycarbonyl)propyl]wyosine(37) in tRNA(Phe) + S-adenosyl-L-homocysteine. The catalysed reaction is 7-[(3S)-(3-amino-3-methoxycarbonyl)propyl]wyosine(37) in tRNA(Phe) + S-adenosyl-L-methionine + CO2 = wybutosine(37) in tRNA(Phe) + S-adenosyl-L-homocysteine + 2 H(+). Its pathway is tRNA modification; wybutosine-tRNA(Phe) biosynthesis. Functionally, probable S-adenosyl-L-methionine-dependent methyltransferase that acts as a component of the wybutosine biosynthesis pathway. Wybutosine is a hyper modified guanosine with a tricyclic base found at the 3'-position adjacent to the anticodon of eukaryotic phenylalanine tRNA. May methylate the carboxyl group of leucine residues to form alpha-leucine ester residues. The sequence is that of tRNA wybutosine-synthesizing protein 4 (PPM2) from Candida glabrata (strain ATCC 2001 / BCRC 20586 / JCM 3761 / NBRC 0622 / NRRL Y-65 / CBS 138) (Yeast).